Reading from the N-terminus, the 129-residue chain is Small ribosomal subunit protein uS12 (129 aa).

The disordered stretch occupies residues 1-25; that stretch reads MPTYNQLVRFGRKSKTRKTKSPALE. Over residues 10 to 20 the composition is skewed to basic residues; sequence FGRKSKTRKTK. A 3-methylthioaspartic acid modification is found at D89. Residues 109 to 129 are disordered; it reads GRKQGRSRYGTPRKQVAVTKK.

This sequence belongs to the universal ribosomal protein uS12 family. In terms of assembly, part of the 30S ribosomal subunit. Contacts proteins S8 and S17. May interact with IF1 in the 30S initiation complex.

Functionally, with S4 and S5 plays an important role in translational accuracy. Its function is as follows. Interacts with and stabilizes bases of the 16S rRNA that are involved in tRNA selection in the A site and with the mRNA backbone. Located at the interface of the 30S and 50S subunits, it traverses the body of the 30S subunit contacting proteins on the other side and probably holding the rRNA structure together. The combined cluster of proteins S8, S12 and S17 appears to hold together the shoulder and platform of the 30S subunit. The chain is Small ribosomal subunit protein uS12 from Rickettsia peacockii (strain Rustic).